Here is a 339-residue protein sequence, read N- to C-terminus: MNALYKKNFLKLSDFTSLDIRNIINIACILKYQKKNKNEFPYLKNKNIVLIFEKQSTRTRCAFEIASFDQGAQVTYLGPGSTHLGYKESIQDTARVLSSIYDGIQYRGHNHETIKNLAKYSNVPVWNGLTEKFHPTQILADLLTIYETLPEKSFCNIKCAYVGDARNNISNTLLEASSLLGLNLCLVAPKCFWPNYDFFLKCQLKAKKNHGNIICTEDIQKGVRGADFIYTDVWVSMGEPKKTWHNRIKLLKKYQVNLKMLLLTQNKKIKVLHCLPSFHDKNTIVGEEIINKHNLDNGIEITNQVFNSQSDVIFRQSENRLHTIKALLLSTLLKEFPYI.

Carbamoyl phosphate is bound by residues 56–59 (STRT), arginine 107, and 134–137 (HPTQ). Residues asparagine 168, aspartate 232, and 236–237 (SM) contribute to the L-ornithine site. Carbamoyl phosphate is bound by residues 274 to 275 (CL) and arginine 320.

It belongs to the aspartate/ornithine carbamoyltransferase superfamily. OTCase family.

The protein localises to the cytoplasm. It carries out the reaction carbamoyl phosphate + L-ornithine = L-citrulline + phosphate + H(+). Its pathway is amino-acid biosynthesis; L-arginine biosynthesis; L-arginine from L-ornithine and carbamoyl phosphate: step 1/3. In terms of biological role, reversibly catalyzes the transfer of the carbamoyl group from carbamoyl phosphate (CP) to the N(epsilon) atom of ornithine (ORN) to produce L-citrulline. The chain is Ornithine carbamoyltransferase from Buchnera aphidicola subsp. Baizongia pistaciae (strain Bp).